The chain runs to 698 residues: SHC SH2 domain-binding protein 1 homolog B (698 aa).

PbH1 repeat units lie at residues 480 to 502, 503 to 524, and 532 to 554; these read CAEL…EIYP, GSKC…LIKD, and IPKI…VLVK.

The protein resides in the midbody. Its subcellular location is the cytoplasm. The protein localises to the cytoskeleton. It is found in the spindle. Its function is as follows. May play a role in signaling pathways governing cellular proliferation. The polypeptide is SHC SH2 domain-binding protein 1 homolog B (shcbp1-b) (Xenopus laevis (African clawed frog)).